We begin with the raw amino-acid sequence, 379 residues long: Class V chitinase (379 aa).

The N-terminal stretch at 1 to 24 (MSSTKLISLIVSITFFLTLQCSMA) is a signal peptide. A GH18 domain is found at 27–369 (VVKASYWFPA…RAASQAWDAT (343 aa)). Chitin is bound at residue Gly-99. The active-site Proton donor is Glu-140. Tyr-259 serves as a coordination point for chitin. N-linked (GlcNAc...) asparagine glycosylation is found at Asn-307 and Asn-327. Trp-348 lines the chitin pocket.

It belongs to the glycosyl hydrolase 18 family. Chitinase class V subfamily.

The enzyme catalyses Random endo-hydrolysis of N-acetyl-beta-D-glucosaminide (1-&gt;4)-beta-linkages in chitin and chitodextrins.. It catalyses the reaction Hydrolysis of N,N'-diacetylchitobiose from the non-reducing end of chitin and chitodextrins.. It participates in glycan degradation; chitin degradation. Functionally, can hydrolyze glycol chitin and chitin oligosaccharides (e.g. N-acetylglucosamine) (GlcNAc)4, (GlcNAc)5 and (GlcNAc)6. Hydrolyzes N-acetylglucosamine oligomers producing dimers from the non-reducing end of the substrates. This chain is Class V chitinase, found in Arabidopsis thaliana (Mouse-ear cress).